We begin with the raw amino-acid sequence, 242 residues long: ATP synthase subunit a (242 aa).

Helical transmembrane passes span 29–49 (SAVA…IAFV), 83–103 (VFFP…IIGM), 114–134 (IIVT…YGIY), 140–160 (FFSL…MVII), 181–201 (VAGH…TWFF), and 206–226 (IALV…QAYI).

The protein belongs to the ATPase A chain family. In terms of assembly, F-type ATPases have 2 components, CF(1) - the catalytic core - and CF(0) - the membrane proton channel. CF(1) has five subunits: alpha(3), beta(3), gamma(1), delta(1), epsilon(1). CF(0) has three main subunits: a(1), b(2) and c(9-12). The alpha and beta chains form an alternating ring which encloses part of the gamma chain. CF(1) is attached to CF(0) by a central stalk formed by the gamma and epsilon chains, while a peripheral stalk is formed by the delta and b chains.

It is found in the cell inner membrane. Its function is as follows. Key component of the proton channel; it plays a direct role in the translocation of protons across the membrane. This chain is ATP synthase subunit a, found in Orientia tsutsugamushi (strain Boryong) (Rickettsia tsutsugamushi).